A 336-amino-acid polypeptide reads, in one-letter code: MYYPFVRKALFQLDPERAHEFTFQQLRRITGTPFEALVRQKVPAKPVNCMGLTFKNPLGLAAGLDKDGECIDALGAMGFGSIEIGTVTPRPQPGNDKPRLFRLVDAEGLINRMGFNNLGVDNLVENVKKAHYDGVLGINIGKNKDTPVEQGKDDYLICMEKIYAYAGYIAINISSPNTPGLRTLQYGEALDDLLTAIKNKQNDLQVMHHKYVPIAVKIAPDLSEEELIQVADSLVRHNIDGVIATNTTLDRSLVQGMKNCDQTGGLSGRPLQLKSTEIIRRLSQELNGRLPIIGVGGIDSVIAAREKIAAGASLVQIYSGFIFKGPPLIKEIVTHI.

Residues 62–66 (AGLDK) and Thr86 contribute to the FMN site. Lys66 contacts substrate. 111–115 (NRMGF) is a substrate binding site. FMN is bound by residues Asn139 and Asn172. Asn172 contacts substrate. The Nucleophile role is filled by Ser175. Residue Asn177 coordinates substrate. FMN is bound by residues Lys217 and Thr245. 246–247 (NT) provides a ligand contact to substrate. Residues Gly268, Gly297, and 318 to 319 (YS) contribute to the FMN site.

It belongs to the dihydroorotate dehydrogenase family. Type 2 subfamily. As to quaternary structure, monomer. FMN serves as cofactor.

Its subcellular location is the cell membrane. The enzyme catalyses (S)-dihydroorotate + a quinone = orotate + a quinol. It participates in pyrimidine metabolism; UMP biosynthesis via de novo pathway; orotate from (S)-dihydroorotate (quinone route): step 1/1. Catalyzes the conversion of dihydroorotate to orotate with quinone as electron acceptor. This Escherichia coli (strain UTI89 / UPEC) protein is Dihydroorotate dehydrogenase (quinone).